Here is a 446-residue protein sequence, read N- to C-terminus: Mitochondrial ribonuclease P protein 1 homolog (446 aa).

The transit peptide at 1–24 (MLKHFARWRLGSQLLKGCAAPVRQ) directs the protein to the mitochondrion. The interval 41–67 (PQKKFVNPFSQPAPALSNDTISENKEE) is disordered. Ser50 and Ser57 each carry phosphoserine. Residue Thr60 is modified to Phosphothreonine. A Phosphoserine modification is found at Ser62. The stretch at 119–158 (LWQIEMKKEADQRKKAERAKEAERRVAEMRKEREENTHII) forms a coiled coil. The SAM-dependent MTase TRM10-type domain maps to 179–373 (QNNRLTRAMQ…KHVPRRKVVQ (195 aa)).

It belongs to the class IV-like SAM-binding methyltransferase superfamily. TRM10 family. In terms of assembly, component of mitochondrial ribonuclease P, a complex composed of rswl/MRPP1, scu/MRPP2 and mldr/MRPP3.

The protein localises to the mitochondrion. In terms of biological role, mitochondrial tRNA N1-methyltransferase involved in mitochondrial tRNA maturation. Component of mitochondrial ribonuclease P, a complex composed of rswl/MRPP1, scu/MRPP2 and mldr/MRPP3., which cleaves tRNA molecules in their 5'-ends. Essential for the structural and functional integrity of mitochondria. Function is essential for pupal development. The sequence is that of Mitochondrial ribonuclease P protein 1 homolog from Drosophila melanogaster (Fruit fly).